Here is a 1027-residue protein sequence, read N- to C-terminus: Presequence protease, mitochondrial (1027 aa).

The transit peptide at 1-22 directs the protein to the mitochondrion; it reads MIRQCRAGLRLCRALYQTSYRW. H98 lines the Zn(2+) pocket. E101 acts as the Proton acceptor in catalysis. Residues H102 and E199 each contribute to the Zn(2+) site. Cysteines 113 and 550 form a disulfide. Positions 800–829 are disordered; sequence KKERKSIRPHVVEKSSSPSSSGSEISRRAT. The span at 814 to 823 shows a compositional bias: low complexity; the sequence is SSSPSSSGSE.

This sequence belongs to the peptidase M16 family. PreP subfamily. As to quaternary structure, monomer and homodimer; homodimerization is induced by binding of the substrate. Zn(2+) serves as cofactor. A disulfide bond locks the enzyme in the closed conformation preventing substrate entry into the catalytic chamber.

It localises to the mitochondrion matrix. Mainly exists in a closed and catalytically competent conformation but a closed-to-open switch allows substrate entry into the catalytic chamber. Substrate binding induces closure and dimerization. A disulfide bond may lock the enzyme in a closed conformation preventing substrate entry into the catalytic chamber, participating in redox regulation of the enzyme. Inhibited by metal-chelating agents. Inhibited by nickel and zinc excess, and slightly activated by manganese. Functionally, metalloendopeptidase of the mitochondrial matrix that functions in peptide cleavage and degradation rather than in protein processing. Has an ATP-independent activity. Specifically cleaves peptides in the range of 5 to 65 residues. Shows a preference for cleavage after small polar residues and before basic residues, but without any positional preference. Degrades the transit peptides of mitochondrial proteins after their cleavage. Also degrades other unstructured peptides. The chain is Presequence protease, mitochondrial (pitrm1) from Xenopus tropicalis (Western clawed frog).